The following is a 488-amino-acid chain: MWENKFEKESLTFDDVLLLPAESDVLPKEVDLSVQLSEGIKLNIPVISAGMDTVTESKMAISMARQGGLGVIHKNMNIEDQADEVQKVKRSENGVISNPFFLTPEESVFEAEALMGKYRISGVPIVNNKEDRQFVGIITNRDLRFIEDFSIKISDVMTKEQLVTAPVGTTLDEAEKLLQQHKIEKLPLVKEGRLEGLITIKDIEKVLEFPNSAKDEHGRLLVGAAIGIAKDTDIRAQKLVEAGVDALVIDTAHGHSKGVLEQVKHIKETFPQVTLIAGNVATAEGTKALYEAGADVVKVGIGPGSICTTRVVAGVGVPQITAVYDCATEARKHGKAIIADGGIKFSGDIIKALAAGGHAVMLGSLLAGTEESPGATEVFQGRQYKVYRGMGSLGAMESGSNDRYFQEDKAPKKFVPEGIEGRIAYKGSLQDTIYQLMGGVRSGMGYTGSRNLEALREEAQFTRMGPAGLAESHPHDVQITKESPNYSF.

CBS domains are found at residues 95-153 and 157-216; these read VISN…SIKI and MTKE…AKDE. Residues D250 and 300–302 each bind NAD(+); that span reads GIG. Residues G302 and G304 each coordinate K(+). S305 lines the IMP pocket. Residue C307 coordinates K(+). C307 serves as the catalytic Thioimidate intermediate. IMP contacts are provided by residues 340 to 342, 363 to 364, and 387 to 391; these read DGG, GS, and YRGMG. R403 (proton acceptor) is an active-site residue. E417 is a binding site for IMP. The tract at residues 467–488 is disordered; the sequence is AGLAESHPHDVQITKESPNYSF. K(+)-binding residues include E471, S472, and H473.

This sequence belongs to the IMPDH/GMPR family. In terms of assembly, homotetramer. The cofactor is K(+).

The catalysed reaction is IMP + NAD(+) + H2O = XMP + NADH + H(+). Its pathway is purine metabolism; XMP biosynthesis via de novo pathway; XMP from IMP: step 1/1. Its activity is regulated as follows. Mycophenolic acid (MPA) is a non-competitive inhibitor that prevents formation of the closed enzyme conformation by binding to the same site as the amobile flap. In contrast, mizoribine monophosphate (MZP) is a competitive inhibitor that induces the closed conformation. MPA is a potent inhibitor of mammalian IMPDHs but a poor inhibitor of the bacterial enzymes. MZP is a more potent inhibitor of bacterial IMPDH. In terms of biological role, catalyzes the conversion of inosine 5'-phosphate (IMP) to xanthosine 5'-phosphate (XMP), the first committed and rate-limiting step in the de novo synthesis of guanine nucleotides, and therefore plays an important role in the regulation of cell growth. The sequence is that of Inosine-5'-monophosphate dehydrogenase from Staphylococcus saprophyticus subsp. saprophyticus (strain ATCC 15305 / DSM 20229 / NCIMB 8711 / NCTC 7292 / S-41).